The primary structure comprises 261 residues: Indole-3-glycerol phosphate synthase (261 aa).

It belongs to the TrpC family.

The catalysed reaction is 1-(2-carboxyphenylamino)-1-deoxy-D-ribulose 5-phosphate + H(+) = (1S,2R)-1-C-(indol-3-yl)glycerol 3-phosphate + CO2 + H2O. It functions in the pathway amino-acid biosynthesis; L-tryptophan biosynthesis; L-tryptophan from chorismate: step 4/5. This chain is Indole-3-glycerol phosphate synthase, found in Paraburkholderia phytofirmans (strain DSM 17436 / LMG 22146 / PsJN) (Burkholderia phytofirmans).